A 227-amino-acid polypeptide reads, in one-letter code: PKHD-type hydroxylase Bphyt_7102 (227 aa).

Residues 80–179 (QVYPPLFNRY…RIASFFWVQS (100 aa)) form the Fe2OG dioxygenase domain. Residues His98, Asp100, and His160 each contribute to the Fe cation site. Arg170 is a binding site for 2-oxoglutarate.

Fe(2+) is required as a cofactor. The cofactor is L-ascorbate.

In Paraburkholderia phytofirmans (strain DSM 17436 / LMG 22146 / PsJN) (Burkholderia phytofirmans), this protein is PKHD-type hydroxylase Bphyt_7102.